Here is a 232-residue protein sequence, read N- to C-terminus: Sugar fermentation stimulation protein homolog (232 aa).

It belongs to the SfsA family.

In Magnetococcus marinus (strain ATCC BAA-1437 / JCM 17883 / MC-1), this protein is Sugar fermentation stimulation protein homolog.